Reading from the N-terminus, the 358-residue chain is MKICVIPGDGIGVEICAEAVRVIDALKDIHGLKIEYEYGLLGGAAYDQTGRPLPVETLRLADEANAILLGAVGGPKWDKLPAESRPERGLLGIRKYLGLNANLRPIKVYPELANASTLRPEVVSGLDMMIVRELTGDIYFGQPRGIRTSGFERVGYNTMEYSESEIALIAEMAFRIARQRSGKVMSVDKMNVLECMQLWRDVVTKVGERFPDVTLDHMLVDNAAMQLVKNPKQFDVLLTGNMFGDILSDEAAMLTGSIGMLPSASLNVEDKGMYEPCHGSAPDIAGQGVANPLGMILSAAMMFRYSLGRPDMADAIESAVQTVLTNGARTRDIFQAGDRLVSTSEMGGLVEAALRRIS.

74 to 87 (GPKWDKLPAESRPE) contributes to the NAD(+) binding site. Residues Arg-94, Arg-104, Arg-132, and Asp-221 each contribute to the substrate site. Mg(2+) contacts are provided by Asp-221, Asp-245, and Asp-249. An NAD(+)-binding site is contributed by 279–291 (GSAPDIAGQGVAN).

The protein belongs to the isocitrate and isopropylmalate dehydrogenases family. LeuB type 1 subfamily. Homodimer. The cofactor is Mg(2+). Mn(2+) is required as a cofactor.

It is found in the cytoplasm. The catalysed reaction is (2R,3S)-3-isopropylmalate + NAD(+) = 4-methyl-2-oxopentanoate + CO2 + NADH. It functions in the pathway amino-acid biosynthesis; L-leucine biosynthesis; L-leucine from 3-methyl-2-oxobutanoate: step 3/4. In terms of biological role, catalyzes the oxidation of 3-carboxy-2-hydroxy-4-methylpentanoate (3-isopropylmalate) to 3-carboxy-4-methyl-2-oxopentanoate. The product decarboxylates to 4-methyl-2 oxopentanoate. The protein is 3-isopropylmalate dehydrogenase 2 of Dechloromonas aromatica (strain RCB).